The chain runs to 184 residues: Ribosome-recycling factor (184 aa).

This sequence belongs to the RRF family.

Its subcellular location is the cytoplasm. Its function is as follows. Responsible for the release of ribosomes from messenger RNA at the termination of protein biosynthesis. May increase the efficiency of translation by recycling ribosomes from one round of translation to another. In Acinetobacter baylyi (strain ATCC 33305 / BD413 / ADP1), this protein is Ribosome-recycling factor.